Here is a 217-residue protein sequence, read N- to C-terminus: FMN-dependent NADH:quinone oxidoreductase (217 aa).

Residues Ser10, 17–19, and 137–140 each bind FMN; these read SAS and SRGG.

The protein belongs to the azoreductase type 1 family. As to quaternary structure, homodimer. It depends on FMN as a cofactor.

The enzyme catalyses 2 a quinone + NADH + H(+) = 2 a 1,4-benzosemiquinone + NAD(+). It carries out the reaction N,N-dimethyl-1,4-phenylenediamine + anthranilate + 2 NAD(+) = 2-(4-dimethylaminophenyl)diazenylbenzoate + 2 NADH + 2 H(+). Functionally, quinone reductase that provides resistance to thiol-specific stress caused by electrophilic quinones. In terms of biological role, also exhibits azoreductase activity. Catalyzes the reductive cleavage of the azo bond in aromatic azo compounds to the corresponding amines. This chain is FMN-dependent NADH:quinone oxidoreductase, found in Streptomyces avermitilis (strain ATCC 31267 / DSM 46492 / JCM 5070 / NBRC 14893 / NCIMB 12804 / NRRL 8165 / MA-4680).